The following is a 268-amino-acid chain: Undecaprenyl-diphosphatase (268 aa).

Transmembrane regions (helical) follow at residues 39-59 (SETFNIFIQLGAVLAVCLIYK), 75-95 (LPYFLKLSVAFIITSILGLWV), 106-126 (LGPVIIAIFGGAFWIYFTEKV), 179-199 (TEFAFLLGIPTMFAASLFAWI), 214-234 (LTLATGFCVSAVVAFISVKWL), and 243-263 (FIPFVWYRVGLGFFLIALVAL).

It belongs to the UppP family.

It localises to the cell inner membrane. The enzyme catalyses di-trans,octa-cis-undecaprenyl diphosphate + H2O = di-trans,octa-cis-undecaprenyl phosphate + phosphate + H(+). Its function is as follows. Catalyzes the dephosphorylation of undecaprenyl diphosphate (UPP). Confers resistance to bacitracin. The protein is Undecaprenyl-diphosphatase of Methylacidiphilum infernorum (isolate V4) (Methylokorus infernorum (strain V4)).